The following is a 403-amino-acid chain: Argininosuccinate synthase (403 aa).

Residues 13–21 (AYSGGLDTS) and Ala-40 contribute to the ATP site. The L-citrulline site is built by Tyr-92 and Ser-97. An ATP-binding site is contributed by Gly-122. The L-aspartate site is built by Thr-124, Asn-128, and Asp-129. Residue Asn-128 participates in L-citrulline binding. 5 residues coordinate L-citrulline: Arg-132, Ser-181, Ser-190, Glu-266, and Tyr-278.

The protein belongs to the argininosuccinate synthase family. Type 1 subfamily. Homotetramer.

It is found in the cytoplasm. It catalyses the reaction L-citrulline + L-aspartate + ATP = 2-(N(omega)-L-arginino)succinate + AMP + diphosphate + H(+). The protein operates within amino-acid biosynthesis; L-arginine biosynthesis; L-arginine from L-ornithine and carbamoyl phosphate: step 2/3. The sequence is that of Argininosuccinate synthase from Aliivibrio fischeri (strain ATCC 700601 / ES114) (Vibrio fischeri).